The chain runs to 515 residues: Putative BTB/POZ domain-containing protein At3g49970 (515 aa).

Residues 1-63 (MLEKLSFLLH…CYDISFEINT (63 aa)) enclose the BTB domain. The 261-residue stretch at 149-409 (DWWADDLAVL…NSDSPAPATA (261 aa)) folds into the NPH3 domain. The residue at position 350 (Tyr350) is a Phosphotyrosine. Residues 395–417 (QENLSNSDSPAPATAEKTLSPPE) form a disordered region. Residues 418 to 452 (LSSYKNELSKLNRENQYLKLELLKVKMKFKELEKE) adopt a coiled-coil conformation. Residues 494–515 (INPFGLKQGQTKQPKSRRHSIS) form a disordered region.

It belongs to the NPH3 family.

The protein operates within protein modification; protein ubiquitination. May act as a substrate-specific adapter of an E3 ubiquitin-protein ligase complex (CUL3-RBX1-BTB) which mediates the ubiquitination and subsequent proteasomal degradation of target proteins. This chain is Putative BTB/POZ domain-containing protein At3g49970, found in Arabidopsis thaliana (Mouse-ear cress).